The following is a 755-amino-acid chain: MAAVAAEAAATAASPGEGGAGEAEPEMEPIPGSEAGTDPLPVTATEASVPDGETDGQQSAPQADEPPLPPPPPPPGELARSPEAVGPELEAEEKLSVRVAESAAAAPQGGPELPPSPASPPEQPPAPEEREEPPLPQPVAPALVPPAGGDSTVSQLIPGSEVRVTLDHIIEDALVVSFRFGEKLFSGVLMDLSKRFGPHGIPVTVFPKREYKDKPEAMPLQSNTFQEGTEVKCEANGAVPDDPSPVPHPELSLAESLWTSKPPPLFHEGAPYPPPLFIRDTYNQSIPQPPPRKIKRPKRKMYREEPTSIMNAIKLRPRQVLCDKCKNSVVAEKKEIRKGSSATDSSKYEDKKRRNESVTTVNKKLKTDHKVDGKNQNESQKRNAVVKVSNIAHSRGRVVKVSAQANTSKAQLSTKKVLQSKNMDHAKAREVLKIAKEKAQKKQNETSTSKNAHSKVHFTRRYQNPSSGSLPPRVRLKPQRYRNEENDSSLKTGLEKMRSGKMAPKPQSRCTSTRSAGEAPSENQSPSKGPEEASSEVQDTNEVHVPGDQDEPQTLGKKGSKNNISVYMTLNQKKSDSSSASVCSIDSTDDLKSSNSECSSSESFDFPPGSMHAPSTSSTSSSSKEEKKLSNSLKMKVFSKNVSKCVTPDGRTICVGDIVWAKIYGFPWWPARILTITVSRKDNGLLVRQEARISWFGSPTTSFLALSQLSPFLENFQSRFNKKRKGLYRKAITEAAKAAKQLTPEVRALLTQFET.

Positions 1-15 (MAAVAAEAAATAASP) are enriched in low complexity. A disordered region spans residues 1-153 (MAAVAAEAAA…VPPAGGDSTV (153 aa)). A compositionally biased stretch (pro residues) spans 64–76 (DEPPLPPPPPPPG). Phosphoserine is present on residues S81, S102, S116, and S119. The span at 112 to 126 (ELPPSPASPPEQPPA) shows a compositional bias: pro residues. Positions 148 to 373 (GGDSTVSQLI…KLKTDHKVDG (226 aa)) are interaction with HDAC1 and MTA1. A Glycyl lysine isopeptide (Lys-Gly) (interchain with G-Cter in SUMO2) cross-link involves residue K208. 4 disordered regions span residues 282-301 (YNQS…KRKM), 334-384 (KEIR…KRNA), 400-562 (KVSA…GSKN), and 578-626 (SSAS…SKEE). Basic residues predominate over residues 292 to 301 (RKIKRPKRKM). Composition is skewed to basic and acidic residues over residues 346-356 (SKYEDKKRRNE) and 368-381 (DHKV…ESQK). The span at 403-421 (AQANTSKAQLSTKKVLQSK) shows a compositional bias: polar residues. The segment covering 422 to 444 (NMDHAKAREVLKIAKEKAQKKQN) has biased composition (basic and acidic residues). An interaction with the H2A.Z/H2AZ1 region spans residues 423 to 574 (MDHAKAREVL…SVYMTLNQKK (152 aa)). The span at 508-527 (SRCTSTRSAGEAPSENQSPS) shows a compositional bias: polar residues. Residues 593-603 (SSNSECSSSES) are compositionally biased toward low complexity. One can recognise a PWWP domain in the interval 655–715 (VGDIVWAKIY…LSQLSPFLEN (61 aa)).

As to quaternary structure, component of a MTA1-specific subcomplex of the NuRD complex (M1HR), composed of PWWP2A, MTA1/2, HDAC1/2, and RBBP4/7 but does not contain CHD4 and MBD3. Interacts with MTA1; the interaction mediates the association of PWWP2A with the M1HR complex. Interacts with H2A.Z/H2AZ1. Interacts (via PWWP domain) with histone H3 trimethylated at 'Lys-36' (H3K36me3). Does not interact with CHD4 and MBD3. Interacts with MTA1 and with HDAC1 in a MTA1-dependent manner. Does not interact with CHD4 and MBD3.

Its subcellular location is the nucleus. Functionally, chromatin-binding protein that acts as an adapter between distinct nucleosome components (H3K36me3 or H2A.Z) and chromatin-modifying complexes, contributing to the regulation of the levels of histone acetylation at actively transcribed genes. Competes with CHD4 and MBD3 for interaction with MTA1 to form a NuRD subcomplex, preventing the formation of full NuRD complex (containing CHD4 and MBD3), leading to recruitment of HDACs to gene promoters resulting in turn in the deacetylation of nearby H3K27 and H2A.Z. Plays a role in facilitating transcriptional elongation and repression of spurious transcription initiation through regulation of histone acetylation. Essential for proper mitosis progression. The protein is PWWP domain-containing protein 2A (PWWP2A) of Homo sapiens (Human).